We begin with the raw amino-acid sequence, 312 residues long: Ribonuclease Z (312 aa).

Zn(2+) contacts are provided by His62, His64, Asp66, His67, His144, Asp215, and His273. Asp66 functions as the Proton acceptor in the catalytic mechanism.

It belongs to the RNase Z family. As to quaternary structure, homodimer. It depends on Zn(2+) as a cofactor.

The enzyme catalyses Endonucleolytic cleavage of RNA, removing extra 3' nucleotides from tRNA precursor, generating 3' termini of tRNAs. A 3'-hydroxy group is left at the tRNA terminus and a 5'-phosphoryl group is left at the trailer molecule.. Functionally, zinc phosphodiesterase, which displays some tRNA 3'-processing endonuclease activity. Probably involved in tRNA maturation, by removing a 3'-trailer from precursor tRNA. The polypeptide is Ribonuclease Z (Prochlorococcus marinus (strain MIT 9215)).